The chain runs to 62 residues: DNA-directed RNA polymerase subunit Rpo10 (62 aa).

Zn(2+) is bound by residues C6, C9, C43, and C44.

This sequence belongs to the archaeal Rpo10/eukaryotic RPB10 RNA polymerase subunit family. In terms of assembly, part of the RNA polymerase complex. Zn(2+) is required as a cofactor.

Its subcellular location is the cytoplasm. It carries out the reaction RNA(n) + a ribonucleoside 5'-triphosphate = RNA(n+1) + diphosphate. DNA-dependent RNA polymerase (RNAP) catalyzes the transcription of DNA into RNA using the four ribonucleoside triphosphates as substrates. This is DNA-directed RNA polymerase subunit Rpo10 from Methanoregula boonei (strain DSM 21154 / JCM 14090 / 6A8).